Reading from the N-terminus, the 398-residue chain is MSLNSLDLPGKPEDTRVVVAMSGGVDSSVVAGILKREGYDVVGVTLQLYDHGAAVHRAGSCCAGQDIEDARRVSESLGIPHYVLDYEARFREAVIDPFANSYVSGETPIPCVSCNQTVKFADLLQTARDLGADALATGHYIRSRANGAHRALYRPVDTDRDQSYFLFATTQEQIDYLRFPLGHLPKAQVREIAEELGLTVAKKQDSQDICFVPQGKYSDIISRLKPEAANPGDIVHIDGRTLGRHDGIVHYTVGQRRGIGVATGEALYVVHLDAANARVIVGPREALETHKVFLRDVNWLGDTPIADLPKSGMEVFAKVRSTRPPRPAVLRHADGQTWVELVDGESGIAPGQACVLYSDDSNAARVFGGGFIGRSEREPQAEEMLRRLMANADKASAA.

ATP-binding positions include 20 to 27 (AMSGGVDS) and leucine 46. Cysteine 114 serves as the catalytic Nucleophile. The cysteines at positions 114 and 210 are disulfide-linked. Position 138 (glycine 138) interacts with ATP. Residues 160–162 (RDQ) are interaction with tRNA. The active-site Cysteine persulfide intermediate is the cysteine 210.

This sequence belongs to the MnmA/TRMU family.

It localises to the cytoplasm. It carries out the reaction S-sulfanyl-L-cysteinyl-[protein] + uridine(34) in tRNA + AH2 + ATP = 2-thiouridine(34) in tRNA + L-cysteinyl-[protein] + A + AMP + diphosphate + H(+). Catalyzes the 2-thiolation of uridine at the wobble position (U34) of tRNA, leading to the formation of s(2)U34. The protein is tRNA-specific 2-thiouridylase MnmA of Brucella abortus (strain S19).